A 72-amino-acid polypeptide reads, in one-letter code: Translation initiation factor IF-1 (72 aa).

Residues 1 to 72 (MSKDDVIEMQ…SRGRITWRAK (72 aa)) enclose the S1-like domain.

This sequence belongs to the IF-1 family. In terms of assembly, component of the 30S ribosomal translation pre-initiation complex which assembles on the 30S ribosome in the order IF-2 and IF-3, IF-1 and N-formylmethionyl-tRNA(fMet); mRNA recruitment can occur at any time during PIC assembly.

The protein resides in the cytoplasm. One of the essential components for the initiation of protein synthesis. Stabilizes the binding of IF-2 and IF-3 on the 30S subunit to which N-formylmethionyl-tRNA(fMet) subsequently binds. Helps modulate mRNA selection, yielding the 30S pre-initiation complex (PIC). Upon addition of the 50S ribosomal subunit IF-1, IF-2 and IF-3 are released leaving the mature 70S translation initiation complex. In Clostridium novyi (strain NT), this protein is Translation initiation factor IF-1.